The sequence spans 754 residues: 5-methyltetrahydropteroyltriglutamate--homocysteine methyltransferase (754 aa).

5-methyltetrahydropteroyltri-L-glutamate contacts are provided by residues 19 to 22 (RELK) and lysine 121. L-homocysteine is bound by residues 423–425 (IGS) and glutamate 476. Residues 423–425 (IGS) and glutamate 476 each bind L-methionine. 5-methyltetrahydropteroyltri-L-glutamate-binding positions include 507–508 (RC) and tryptophan 553. Aspartate 591 is an L-homocysteine binding site. L-methionine is bound at residue aspartate 591. Position 597 (glutamate 597) interacts with 5-methyltetrahydropteroyltri-L-glutamate. Histidine 633, cysteine 635, and glutamate 657 together coordinate Zn(2+). The Proton donor role is filled by histidine 686. Position 718 (cysteine 718) interacts with Zn(2+).

Belongs to the vitamin-B12 independent methionine synthase family. It depends on Zn(2+) as a cofactor.

The enzyme catalyses 5-methyltetrahydropteroyltri-L-glutamate + L-homocysteine = tetrahydropteroyltri-L-glutamate + L-methionine. Its pathway is amino-acid biosynthesis; L-methionine biosynthesis via de novo pathway; L-methionine from L-homocysteine (MetE route): step 1/1. Functionally, catalyzes the transfer of a methyl group from 5-methyltetrahydrofolate to homocysteine resulting in methionine formation. The protein is 5-methyltetrahydropteroyltriglutamate--homocysteine methyltransferase of Corynebacterium efficiens (strain DSM 44549 / YS-314 / AJ 12310 / JCM 11189 / NBRC 100395).